A 437-amino-acid chain; its full sequence is Vacuolar protein sorting-associated protein 4A (437 aa).

The tract at residues 1–84 (MTTSTLQKAI…RSKEKHGKKP (84 aa)) is interaction with CHMP1B. The MIT domain occupies 2–80 (TTSTLQKAID…KDYLRSKEKH (79 aa)). Lys-8 carries the N6-acetyllysine modification. Positions 75-106 (RSKEKHGKKPVKENQSEGKGSDSDSEGDNPEK) are disordered. Positions 84-96 (PVKENQSEGKGSD) are enriched in basic and acidic residues. 2 positions are modified to phosphoserine: Ser-95 and Ser-97. 167 to 174 (GPPGTGKS) provides a ligand contact to ATP.

This sequence belongs to the AAA ATPase family. As to quaternary structure, proposed to be monomeric or homodimeric in nucleotide-free form and to oligomerize upon binding to ATP to form two stacked hexameric or heptameric rings with a central pore through which ESCRT-III substrates are translocated in an ATP-dependent manner. Interacts with CHMP1A, CHMP1B, CHMP2A, CHMP2B, CHMP3, CHMP4A, CHMP4B, CHMP4C and CHMP6. Interacts with VPS4B; the interaction suggests a heteromeric assembly with VPS4B. Interacts with SPAST. Interacts with IST1. Interacts with ZFYVE19/ANCHR; leading to retain it at midbody. Ubiquitously expressed.

It is found in the late endosome membrane. The protein localises to the midbody. It localises to the cytoplasm. The protein resides in the cytoskeleton. Its subcellular location is the spindle. It catalyses the reaction ATP + H2O = ADP + phosphate + H(+). In terms of biological role, involved in late steps of the endosomal multivesicular bodies (MVB) pathway. Recognizes membrane-associated ESCRT-III assemblies and catalyzes their disassembly, possibly in combination with membrane fission. Redistributes the ESCRT-III components to the cytoplasm for further rounds of MVB sorting. MVBs contain intraluminal vesicles (ILVs) that are generated by invagination and scission from the limiting membrane of the endosome and mostly are delivered to lysosomes enabling degradation of membrane proteins, such as stimulated growth factor receptors, lysosomal enzymes and lipids. It is required for proper accomplishment of various processes including the regulation of endosome size, primary cilium organization, mitotic spindle organization, chromosome segregation, and nuclear envelope sealing and spindle disassembly during anaphase. Involved in cytokinesis: retained at the midbody by ZFYVE19/ANCHR and CHMP4C until abscission checkpoint signaling is terminated at late cytokinesis. It is then released following dephosphorylation of CHMP4C, leading to abscission. VPS4A/B are required for the exosomal release of SDCBP, CD63 and syndecan. Critical for normal erythroblast cytokinesis and correct erythropoiesis. Its function is as follows. (Microbial infection) In conjunction with the ESCRT machinery also appears to function in topologically equivalent membrane fission events, such as the terminal stages of cytokinesis and enveloped virus budding (HIV-1 and other lentiviruses). The polypeptide is Vacuolar protein sorting-associated protein 4A (Homo sapiens (Human)).